We begin with the raw amino-acid sequence, 131 residues long: Small ribosomal subunit protein eS6 (131 aa).

A disordered region spans residues 76-95 (APPGFKPKRKGERRRKTVRG). The span at 81 to 93 (KPKRKGERRRKTV) shows a compositional bias: basic residues.

It belongs to the eukaryotic ribosomal protein eS6 family.

The polypeptide is Small ribosomal subunit protein eS6 (Methanocaldococcus jannaschii (strain ATCC 43067 / DSM 2661 / JAL-1 / JCM 10045 / NBRC 100440) (Methanococcus jannaschii)).